The primary structure comprises 113 residues: Nucleoid-associated protein Syncc9902_0023 (113 aa).

This sequence belongs to the YbaB/EbfC family. In terms of assembly, homodimer.

The protein localises to the cytoplasm. The protein resides in the nucleoid. Functionally, binds to DNA and alters its conformation. May be involved in regulation of gene expression, nucleoid organization and DNA protection. This is Nucleoid-associated protein Syncc9902_0023 from Synechococcus sp. (strain CC9902).